We begin with the raw amino-acid sequence, 445 residues long: Phosphoglucosamine mutase (445 aa).

The Phosphoserine intermediate role is filled by Ser-102. Mg(2+) is bound by residues Ser-102, Asp-241, Asp-243, and Asp-245. The residue at position 102 (Ser-102) is a Phosphoserine.

The protein belongs to the phosphohexose mutase family. Mg(2+) is required as a cofactor. Activated by phosphorylation.

The catalysed reaction is alpha-D-glucosamine 1-phosphate = D-glucosamine 6-phosphate. Functionally, catalyzes the conversion of glucosamine-6-phosphate to glucosamine-1-phosphate. This Acinetobacter baumannii (strain ACICU) protein is Phosphoglucosamine mutase.